Here is a 932-residue protein sequence, read N- to C-terminus: UPF0182 protein Dred_1797 (932 aa).

The next 7 membrane-spanning stretches (helical) occupy residues 11–31, 53–73, 118–138, 180–200, 209–229, 264–284, and 292–312; these read LVIL…GLYI, IGLR…NLML, LTLA…SSVA, ILAS…LVTD, IFRF…FFVI, YKAL…NIFL, and YAIG…PAII. The interval 861–883 is disordered; it reads DRPQQGVPPATDQPAGQQPAPEK.

This sequence belongs to the UPF0182 family.

Its subcellular location is the cell membrane. The protein is UPF0182 protein Dred_1797 of Desulforamulus reducens (strain ATCC BAA-1160 / DSM 100696 / MI-1) (Desulfotomaculum reducens).